The chain runs to 609 residues: MPAMPGLVSVKTPSDTPPLRVAVPDTQPLSNPPRTPMKKTPSSTPSRSKPSPNRSTGKKDSPTVSSSTAAVIDVDDPSLDNPDLGPFLLKLARDAIASGEGPNKALDYAIRATKSFERCCAAVAPPIPGGSDGGPVLDLAMSLHVLAAIYCSLGRFDEAVPPLERAIQVPDPTRGPDHSLAAFSGHMQLGDTLSMLGQIDRSIACYEEGLKIQIQTLGDTDPRVGETCRYLAEAYVQAMQFNKAEELCKKTLEIHRAHSEPASLEEAADRRLMAIICEAKGDYENALEHLVLASMAMIASGQESEVASIDVSIGNIYMSLCRFDEAVFSYQKALTVFKASKGETHPTVASVFVRLAELYHRTGKLRESKSYCENALRIYNKPVPGTTVEEIAGGLTEISAIYESVDEPEEALKLLQKSMKLLEDKPGQQSAIAGLEARMGVMYYTVGRYEDARNAFESAVTKLRAAGEKSAFFGVVLNQMGLACVQLFKIDEAGELFEEARGILEQERGPCDQDTLGVYSNLAATYDAMGRIEDAIEILEQVLKLREEKLGTANPDFEDEKKRLAELLKEAGRSRNYKAKSLQNLIDPNARPPKKESSAKKWPSLGFKF.

The segment at Met1–Pro77 is disordered. The span at Lys38 to Ser55 shows a compositional bias: low complexity. TPR repeat units follow at residues Ala140–Thr173, Phe183–Thr216, Gly225–His258, Ala267–Gly301, Ala307–Ser340, Ala349–Pro382, Ala392–Lys425, Ala433–Ala466, Gly474–Glu507, and Leu516–Lys549. The tract at residues Leu582–Phe609 is disordered.

Belongs to the kinesin light chain family. As to quaternary structure, interacts with IQD1.

Its subcellular location is the cytoplasm. The protein localises to the cytoskeleton. This Arabidopsis thaliana (Mouse-ear cress) protein is Protein KINESIN LIGHT CHAIN-RELATED 1.